The primary structure comprises 190 residues: Inner membrane-spanning protein YciB (190 aa).

5 helical membrane passes run 22-42, 50-70, 76-96, 118-138, and 148-168; these read IYVATGALIVATAIQIVLTFA, MQLITFAMVAIFGGMTIFLHD, WKVTIVYAIFAIGLAVSHAMG, INWAWVAFFSFCAGLNVYVAF, and FKVFGLLIATFAYMIATGFYI.

The protein belongs to the YciB family.

The protein resides in the cell inner membrane. Its function is as follows. Plays a role in cell envelope biogenesis, maintenance of cell envelope integrity and membrane homeostasis. This Vibrio campbellii (strain ATCC BAA-1116) protein is Inner membrane-spanning protein YciB.